Consider the following 474-residue polypeptide: Proline--tRNA ligase (474 aa).

This sequence belongs to the class-II aminoacyl-tRNA synthetase family. ProS type 3 subfamily. In terms of assembly, homodimer.

The protein resides in the cytoplasm. It carries out the reaction tRNA(Pro) + L-proline + ATP = L-prolyl-tRNA(Pro) + AMP + diphosphate. Functionally, catalyzes the attachment of proline to tRNA(Pro) in a two-step reaction: proline is first activated by ATP to form Pro-AMP and then transferred to the acceptor end of tRNA(Pro). The sequence is that of Proline--tRNA ligase from Onion yellows phytoplasma (strain OY-M).